We begin with the raw amino-acid sequence, 208 residues long: Probable very-long-chain (3R)-3-hydroxyacyl-CoA dehydratase (208 aa).

Residues 1 to 11 (MSKILKIQYLK) are Cytoplasmic-facing. Residues 12–35 (LYNVISCFLWMSVLLRTGLIWGIT) traverse the membrane as a helical segment. The Lumenal segment spans residues 36–46 (KDTAVVFHETN). The chain crosses the membrane as a helical span at residues 47–67 (TLVRWVQTLAIAEVFHSIFGL). The Cytoplasmic segment spans residues 68 to 78 (VSSSPLTTIIQ). A helical transmembrane segment spans residues 79 to 97 (VASRLYLVWGVCYPFSYVI). Residues 98–102 (EGSPI) are Lumenal-facing. Residues 103–123 (YLSMIIAWSITEIIRYAFYAF) traverse the membrane as a helical segment. Residues 124–134 (NLNGDIPAFLT) lie on the Cytoplasmic side of the membrane. The chain crosses the membrane as a helical span at residues 135–157 (WLRYNTFLILYPIGAGSEFLLVL). Residues Tyr-145 and Glu-152 contribute to the active site. Over 158–171 (KSRIAAQYVWSLNK) the chain is Lumenal. Residues 172–192 (LLWPILMSIYPPGLYIMYTHM) traverse the membrane as a helical segment. At 193–208 (LAQRRKISKRAAARRT) the chain is on the cytoplasmic side.

Belongs to the very long-chain fatty acids dehydratase HACD family.

Its subcellular location is the endoplasmic reticulum membrane. It carries out the reaction a very-long-chain (3R)-3-hydroxyacyl-CoA = a very-long-chain (2E)-enoyl-CoA + H2O. The protein operates within lipid metabolism; fatty acid biosynthesis. Its function is as follows. Catalyzes the third of the four reactions of the long-chain fatty acids elongation cycle. This endoplasmic reticulum-bound enzymatic process, allows the addition of two carbons to the chain of long- and very long-chain fatty acids/VLCFAs per cycle. This enzyme catalyzes the dehydration of the 3-hydroxyacyl-CoA intermediate into trans-2,3-enoyl-CoA, within each cycle of fatty acid elongation. Thereby, it participates in the production of VLCFAs of different chain lengths that are involved in multiple biological processes as precursors of membrane lipids and lipid mediators. This is Probable very-long-chain (3R)-3-hydroxyacyl-CoA dehydratase from Schizosaccharomyces pombe (strain 972 / ATCC 24843) (Fission yeast).